A 500-amino-acid polypeptide reads, in one-letter code: Cytochrome P450 71B36 (500 aa).

The chain crosses the membrane as a helical span at residues 1–21; sequence MATILFLSLLFLSCILLAAFT. Cys-440 lines the heme pocket.

This sequence belongs to the cytochrome P450 family. Requires heme as cofactor.

The protein resides in the membrane. This Arabidopsis thaliana (Mouse-ear cress) protein is Cytochrome P450 71B36 (CYP71B36).